We begin with the raw amino-acid sequence, 132 residues long: Small ribosomal subunit protein uS8 (132 aa).

It belongs to the universal ribosomal protein uS8 family. As to quaternary structure, part of the 30S ribosomal subunit. Contacts proteins S5 and S12.

Functionally, one of the primary rRNA binding proteins, it binds directly to 16S rRNA central domain where it helps coordinate assembly of the platform of the 30S subunit. The protein is Small ribosomal subunit protein uS8 of Anoxybacillus flavithermus (strain DSM 21510 / WK1).